Consider the following 105-residue polypeptide: Putative membrane protein insertion efficiency factor (105 aa).

Residues 68–105 (FHPGGLDPVPPRRNESGTEISDARPGSDGEASPGAPGL) are disordered. Residues 77–94 (PPRRNESGTEISDARPGS) show a composition bias toward basic and acidic residues.

The protein belongs to the UPF0161 family.

The protein resides in the cell membrane. Could be involved in insertion of integral membrane proteins into the membrane. In Thermobifida fusca (strain YX), this protein is Putative membrane protein insertion efficiency factor.